The following is a 689-amino-acid chain: Glycine--tRNA ligase beta subunit (689 aa).

It belongs to the class-II aminoacyl-tRNA synthetase family. In terms of assembly, tetramer of two alpha and two beta subunits.

Its subcellular location is the cytoplasm. It catalyses the reaction tRNA(Gly) + glycine + ATP = glycyl-tRNA(Gly) + AMP + diphosphate. The sequence is that of Glycine--tRNA ligase beta subunit from Shewanella baltica (strain OS195).